The following is a 219-amino-acid chain: Transcriptional regulator AcuR (219 aa).

Residues 1-25 (MPLTDTPPSVPQKPRRGRPRGAPDA) form a disordered region. One can recognise an HTH tetR-type domain in the interval 26–86 (SLAHQSLIRA…ALIEAYDTYF (61 aa)). Positions 49 to 68 (GVDEILKAARVPKGSFYHYF) form a DNA-binding region, H-T-H motif.

Its function is as follows. A transcriptional repressor for its operon. Probably binds to 2 operator sequences in the promoter. The sequence is that of Transcriptional regulator AcuR (acuR) from Cereibacter sphaeroides (strain ATCC 17023 / DSM 158 / JCM 6121 / CCUG 31486 / LMG 2827 / NBRC 12203 / NCIMB 8253 / ATH 2.4.1.) (Rhodobacter sphaeroides).